The following is a 167-amino-acid chain: UPF0225 protein VP1145 (167 aa).

This sequence belongs to the UPF0225 family.

In Vibrio parahaemolyticus serotype O3:K6 (strain RIMD 2210633), this protein is UPF0225 protein VP1145.